Reading from the N-terminus, the 95-residue chain is Protein TusB (95 aa).

Belongs to the DsrH/TusB family. Heterohexamer, formed by a dimer of trimers. The hexameric TusBCD complex contains 2 copies each of TusB, TusC and TusD. The TusBCD complex interacts with TusE.

It localises to the cytoplasm. Functionally, part of a sulfur-relay system required for 2-thiolation of 5-methylaminomethyl-2-thiouridine (mnm(5)s(2)U) at tRNA wobble positions. The polypeptide is Protein TusB (Cronobacter sakazakii (strain ATCC BAA-894) (Enterobacter sakazakii)).